Reading from the N-terminus, the 71-residue chain is Small ribosomal subunit protein bS21 (71 aa).

Residues 48–59 are compositionally biased toward basic residues; that stretch reads KAAAAVKRHAKK. The interval 48-71 is disordered; the sequence is KAAAAVKRHAKKVQRENRKFQRLY. Basic and acidic residues predominate over residues 60–71; it reads VQRENRKFQRLY.

Belongs to the bacterial ribosomal protein bS21 family.

The sequence is that of Small ribosomal subunit protein bS21 from Teredinibacter turnerae (strain ATCC 39867 / T7901).